Reading from the N-terminus, the 209-residue chain is Large ribosomal subunit protein uL3 (209 aa).

Residues 127–147 (YSRGPMGHGSKSHRVAGARSA) form a disordered region.

It belongs to the universal ribosomal protein uL3 family. Part of the 50S ribosomal subunit. Forms a cluster with proteins L14 and L19.

One of the primary rRNA binding proteins, it binds directly near the 3'-end of the 23S rRNA, where it nucleates assembly of the 50S subunit. This Finegoldia magna (strain ATCC 29328 / DSM 20472 / WAL 2508) (Peptostreptococcus magnus) protein is Large ribosomal subunit protein uL3.